A 137-amino-acid chain; its full sequence is Small ribosomal subunit protein uS12 (137 aa).

The segment at 1–57 (MPTINQLVRKPRQSKSKKSDSPVLNRGFNSKKKQFTNLNSPQKRGVCTRVGTMTPRK) is disordered. A 3-methylthioaspartic acid modification is found at Asp-102. A disordered region spans residues 118–137 (SGVDGRRQGRSLYGTKKPKN).

The protein belongs to the universal ribosomal protein uS12 family. As to quaternary structure, part of the 30S ribosomal subunit. Contacts proteins S8 and S17. May interact with IF1 in the 30S initiation complex.

With S4 and S5 plays an important role in translational accuracy. In terms of biological role, interacts with and stabilizes bases of the 16S rRNA that are involved in tRNA selection in the A site and with the mRNA backbone. Located at the interface of the 30S and 50S subunits, it traverses the body of the 30S subunit contacting proteins on the other side and probably holding the rRNA structure together. The combined cluster of proteins S8, S12 and S17 appears to hold together the shoulder and platform of the 30S subunit. The protein is Small ribosomal subunit protein uS12 of Staphylococcus haemolyticus (strain JCSC1435).